The sequence spans 43 residues: Protein PsbN (43 aa).

A helical membrane pass occupies residues 7–29 (LSIALAAVCIGVTGYSIYLSFGP).

The protein belongs to the PsbN family.

The protein localises to the cellular thylakoid membrane. May play a role in photosystem I and II biogenesis. This Thermosynechococcus vestitus (strain NIES-2133 / IAM M-273 / BP-1) protein is Protein PsbN.